The chain runs to 365 residues: MLLMRRFAFLTSSVYFKYIPIYSQYHYSSQFPINMNPKKVAQLPVHNKSTLPPQEIIDLFKITFLEELYPKDQDNEKSPLTEQIQAVKSDLYNRDYNAAFNNDSKRIAYCCRWSPSRATSYASVFAHFPELLKIIRCEIDDKDSNVLCIGGGAGGELVALASIFTLSRDFSSKFASALKIDNEVNKKPRNLNIQLVDIADWSTVVEKLTATIKSKWLYGDSEAESFNVNFTHKDCLQMTEPQDIKIYQGLDLITLLFTTNELFTQKKVESIKFLQRLNENCAPGCHLLILESAGSYSHITINNKKFPIQFLIDTILVGNRKDKGTTGPWSLVSENDSIWYRMDPKLDYSIPLENMRFFYRLYVKN.

Belongs to the class I-like SAM-binding methyltransferase superfamily.

The protein resides in the cytoplasm. The protein localises to the nucleus. The enzyme catalyses uridine(2843) in 25S rRNA + S-adenosyl-L-methionine = N(3)-methyluridine(2843) in 25S rRNA + S-adenosyl-L-homocysteine + H(+). S-adenosyl-L-methionine-dependent methyltransferase that specifically methylates the N(3) position of uridine 2843 (m3U2843) in 25S rRNA. This chain is 25S rRNA (uridine(2843)-N(3))-methyltransferase (BMT6), found in Saccharomyces cerevisiae (strain ATCC 204508 / S288c) (Baker's yeast).